Consider the following 401-residue polypeptide: Decapping and exoribonuclease protein (401 aa).

The disordered stretch occupies residues 1–27 (MEGNKSMQREKIDRPMKRGPEQNSLSP). Over residues 7–20 (MQREKIDRPMKRGP) the composition is skewed to basic and acidic residues. Substrate contacts are provided by residues arginine 69, glutamate 114, and 149 to 151 (WRG). Glutamate 210 is a binding site for Mg(2+). Residues cysteine 235 and glutamate 252 each coordinate substrate. Glutamate 252, aspartate 254, glutamate 271, and leucine 272 together coordinate Mg(2+). Residues lysine 273 and glutamine 298 each contribute to the substrate site.

It belongs to the DXO/Dom3Z family. Mg(2+) serves as cofactor.

It is found in the nucleus. The catalysed reaction is a 5'-end triphospho-ribonucleoside in mRNA + H2O = a 5'-end phospho-ribonucleoside in mRNA + diphosphate + H(+). It catalyses the reaction a 5'-end NAD(+)-phospho-ribonucleoside in mRNA + H2O = a 5'-end phospho-ribonucleoside in mRNA + NAD(+) + H(+). The enzyme catalyses a 5'-end NAD(+)-phospho-ribonucleoside in snoRNA + H2O = a 5'-end phospho-ribonucleoside in snoRNA + NAD(+) + H(+). It carries out the reaction a 5'-end (N(7)-methyl 5'-triphosphoguanosine)-ribonucleoside-ribonucleotide in mRNA + H2O = a (N(7)-methyl 5'-triphosphoguanosine)-nucleoside + a 5'-end phospho-ribonucleoside in mRNA + H(+). The catalysed reaction is a 5'-end FAD-phospho-ribonucleoside in mRNA + H2O = a 5'-end phospho-ribonucleoside in mRNA + FAD + H(+). It catalyses the reaction a 5'-end CoA-ribonucleoside in mRNA + H2O = 3'-dephospho-CoA + a 5'-end phospho-ribonucleoside in mRNA + H(+). In terms of biological role, decapping enzyme for NAD-capped RNAs: specifically hydrolyzes the nicotinamide adenine dinucleotide (NAD) cap from a subset of RNAs by removing the entire NAD moiety from the 5'-end of an NAD-capped RNA. The NAD-cap is present at the 5'-end of some RNAs and snoRNAs. In contrast to the canonical 5'-end N7 methylguanosine (m7G) cap, the NAD cap promotes mRNA decay. Also acts as a non-canonical decapping enzyme that removes the entire cap structure of m7G capped or incompletely capped RNAs and mediates their subsequent degradation. Specifically degrades pre-mRNAs with a defective 5'-end m7G cap and is part of a pre-mRNA capping quality control. Has decapping activity toward incomplete 5'-end m7G cap mRNAs such as unmethylated 5'-end-capped RNA (cap0), while it has no activity toward 2'-O-ribose methylated m7G cap (cap1). Also has 5'-3' exoribonuclease activities: The 5'-end monophosphate RNA is then degraded by the 5'-3' exoribonuclease activity, enabling this enzyme to decap and degrade incompletely capped mRNAs. Also possesses RNA 5'-pyrophosphohydrolase activity by hydrolyzing the 5'-end triphosphate to release pyrophosphates. Exhibits decapping activity towards FAD-capped RNAs. Exhibits decapping activity towards dpCoA-capped RNAs in vitro. The sequence is that of Decapping and exoribonuclease protein from Xenopus laevis (African clawed frog).